A 179-amino-acid chain; its full sequence is Large ribosomal subunit protein uL5 (179 aa).

It belongs to the universal ribosomal protein uL5 family. As to quaternary structure, part of the 50S ribosomal subunit; part of the 5S rRNA/L5/L18/L25 subcomplex. Contacts the 5S rRNA and the P site tRNA. Forms a bridge to the 30S subunit in the 70S ribosome.

Functionally, this is one of the proteins that bind and probably mediate the attachment of the 5S RNA into the large ribosomal subunit, where it forms part of the central protuberance. In the 70S ribosome it contacts protein S13 of the 30S subunit (bridge B1b), connecting the 2 subunits; this bridge is implicated in subunit movement. Contacts the P site tRNA; the 5S rRNA and some of its associated proteins might help stabilize positioning of ribosome-bound tRNAs. The protein is Large ribosomal subunit protein uL5 of Ruthia magnifica subsp. Calyptogena magnifica.